Reading from the N-terminus, the 98-residue chain is NHHLNNNIEYSDDKENCLNESLEYNHQIKLNKQNQNSFRNRTAFTDYQLICLEREFSHIQYLSRIDRIHLAQNLNLTEKQVKIWFQNRRVRWRKRNLF.

The homeobox DNA-binding region spans 37-96 (SFRNRTAFTDYQLICLEREFSHIQYLSRIDRIHLAQNLNLTEKQVKIWFQNRRVRWRKRN).

The protein resides in the nucleus. This chain is Homeobox protein SMOX-4 (SMOX-4), found in Schistosoma mansoni (Blood fluke).